Here is a 1290-residue protein sequence, read N- to C-terminus: DNA-directed RNA polymerase subunit beta' (1290 aa).

Positions 60, 62, 75, and 78 each coordinate Zn(2+). 3 residues coordinate Mg(2+): aspartate 535, aspartate 537, and aspartate 539. Residues cysteine 875, cysteine 953, cysteine 960, and cysteine 963 each coordinate Zn(2+).

The protein belongs to the RNA polymerase beta' chain family. In terms of assembly, the RNAP catalytic core consists of 2 alpha, 1 beta, 1 beta' and 1 omega subunit. When a sigma factor is associated with the core the holoenzyme is formed, which can initiate transcription. Requires Mg(2+) as cofactor. The cofactor is Zn(2+).

The enzyme catalyses RNA(n) + a ribonucleoside 5'-triphosphate = RNA(n+1) + diphosphate. In terms of biological role, DNA-dependent RNA polymerase catalyzes the transcription of DNA into RNA using the four ribonucleoside triphosphates as substrates. The polypeptide is DNA-directed RNA polymerase subunit beta' (Nocardioides sp. (strain ATCC BAA-499 / JS614)).